A 495-amino-acid polypeptide reads, in one-letter code: Probable cytosol aminopeptidase (495 aa).

Residues lysine 266 and aspartate 271 each coordinate Mn(2+). Residue lysine 278 is part of the active site. 3 residues coordinate Mn(2+): aspartate 289, aspartate 348, and glutamate 350. Residue arginine 352 is part of the active site.

It belongs to the peptidase M17 family. The cofactor is Mn(2+).

It localises to the cytoplasm. The enzyme catalyses Release of an N-terminal amino acid, Xaa-|-Yaa-, in which Xaa is preferably Leu, but may be other amino acids including Pro although not Arg or Lys, and Yaa may be Pro. Amino acid amides and methyl esters are also readily hydrolyzed, but rates on arylamides are exceedingly low.. It catalyses the reaction Release of an N-terminal amino acid, preferentially leucine, but not glutamic or aspartic acids.. Presumably involved in the processing and regular turnover of intracellular proteins. Catalyzes the removal of unsubstituted N-terminal amino acids from various peptides. The chain is Probable cytosol aminopeptidase from Pseudomonas paraeruginosa (strain DSM 24068 / PA7) (Pseudomonas aeruginosa (strain PA7)).